Here is a 688-residue protein sequence, read N- to C-terminus: Potassium-transporting ATPase ATP-binding subunit (688 aa).

The next 4 membrane-spanning stretches (helical) occupy residues 35–55 (VMFV…QALG), 62–82 (AGFI…ANFA), 219–239 (IALT…IVTL), and 260–280 (VLIA…LSAI). Asp313 acts as the 4-aspartylphosphate intermediate in catalysis. ATP-binding positions include Asp350, Glu354, 383-390 (FSAHTRMS), and Lys401. Residues Asp524 and Asp528 each coordinate Mg(2+). The next 3 membrane-spanning stretches (helical) occupy residues 594–614 (FAII…LNVM), 622–642 (AILS…PLAL), and 668–688 (VIVP…VGLA).

Belongs to the cation transport ATPase (P-type) (TC 3.A.3) family. Type IA subfamily. The system is composed of three essential subunits: KdpA, KdpB and KdpC.

The protein localises to the cell inner membrane. The catalysed reaction is K(+)(out) + ATP + H2O = K(+)(in) + ADP + phosphate + H(+). In terms of biological role, part of the high-affinity ATP-driven potassium transport (or Kdp) system, which catalyzes the hydrolysis of ATP coupled with the electrogenic transport of potassium into the cytoplasm. This subunit is responsible for energy coupling to the transport system and for the release of the potassium ions to the cytoplasm. In Dechloromonas aromatica (strain RCB), this protein is Potassium-transporting ATPase ATP-binding subunit.